A 956-amino-acid chain; its full sequence is UvrABC system protein A (956 aa).

Gly-33–Ser-40 is an ATP binding site. The C4-type zinc finger occupies Cys-252–Cys-279. 2 consecutive ABC transporter domains span residues Trp-309 to Ile-587 and Gly-607 to Lys-936. Residue Gly-639 to Ser-646 coordinates ATP. The C4-type zinc-finger motif lies at Cys-738 to Cys-764.

Belongs to the ABC transporter superfamily. UvrA family. In terms of assembly, forms a heterotetramer with UvrB during the search for lesions.

It is found in the cytoplasm. Its function is as follows. The UvrABC repair system catalyzes the recognition and processing of DNA lesions. UvrA is an ATPase and a DNA-binding protein. A damage recognition complex composed of 2 UvrA and 2 UvrB subunits scans DNA for abnormalities. When the presence of a lesion has been verified by UvrB, the UvrA molecules dissociate. The polypeptide is UvrABC system protein A (Listeria monocytogenes serotype 4b (strain F2365)).